Reading from the N-terminus, the 438-residue chain is Xaa-Pro dipeptidase 2 (438 aa).

Positions 242, 253, 333, 378, and 414 each coordinate Mn(2+).

The protein belongs to the peptidase M24B family. Bacterial-type prolidase subfamily. Mn(2+) serves as cofactor.

The enzyme catalyses Xaa-L-Pro dipeptide + H2O = an L-alpha-amino acid + L-proline. Functionally, splits dipeptides with a prolyl residue in the C-terminal position. In Idiomarina loihiensis (strain ATCC BAA-735 / DSM 15497 / L2-TR), this protein is Xaa-Pro dipeptidase 2.